The chain runs to 267 residues: Phosphate import ATP-binding protein PstB (267 aa).

The ABC transporter domain occupies 21-262 (IAIRNLEFYY…PSKQQTEDYI (242 aa)). Residue 53–60 (GPSGCGKS) participates in ATP binding.

It belongs to the ABC transporter superfamily. Phosphate importer (TC 3.A.1.7) family. In terms of assembly, the complex is composed of two ATP-binding proteins (PstB), two transmembrane proteins (PstC and PstA) and a solute-binding protein (PstS).

The protein localises to the cell inner membrane. It carries out the reaction phosphate(out) + ATP + H2O = ADP + 2 phosphate(in) + H(+). Part of the ABC transporter complex PstSACB involved in phosphate import. Responsible for energy coupling to the transport system. The polypeptide is Phosphate import ATP-binding protein PstB (Xylella fastidiosa (strain 9a5c)).